We begin with the raw amino-acid sequence, 582 residues long: Choline kinase (582 aa).

The disordered stretch occupies residues 1–36; that stretch reads MVQESRPGSVRSYSVGYQARSRSSSQRRHSLTRQRS. Ser-30 carries the phosphoserine; by PKA modification. A phosphoserine mark is found at Ser-48 and Ser-51. Thr-54 is modified (phosphothreonine). A Phosphoserine; by PKA modification is found at Ser-85.

It belongs to the choline/ethanolamine kinase family. In terms of assembly, monomer. Interacts with NAP1. Mg(2+) serves as cofactor.

It is found in the cytoplasm. It catalyses the reaction choline + ATP = phosphocholine + ADP + H(+). It carries out the reaction ethanolamine + ATP = phosphoethanolamine + ADP + H(+). It participates in phospholipid metabolism; phosphatidylcholine biosynthesis; phosphocholine from choline: step 1/1. Functionally, catalyzes the committed step in the synthesis of phosphatidylcholine by the CDP-choline pathway. Also exhibits ethanolamine kinase activity but it is a poor substrate at 14% efficiency compared with choline. The sequence is that of Choline kinase from Saccharomyces cerevisiae (strain ATCC 204508 / S288c) (Baker's yeast).